The chain runs to 478 residues: JmjC domain-containing histone demethylation protein 1 (478 aa).

Residues serine 5–lysine 68 form a PHD-type zinc finger. The 167-residue stretch at serine 217–arginine 383 folds into the JmjC domain. Residue threonine 266 participates in substrate binding. Residues histidine 269 and aspartate 271 each contribute to the Fe cation site. Lysine 286 contacts substrate. Histidine 351 provides a ligand contact to Fe cation.

It belongs to the JHDM1 histone demethylase family. Requires Fe(2+) as cofactor.

The protein localises to the nucleus. It carries out the reaction N(6),N(6)-dimethyl-L-lysyl(36)-[histone H3] + 2 2-oxoglutarate + 2 O2 = L-lysyl(36)-[histone H3] + 2 formaldehyde + 2 succinate + 2 CO2. Histone demethylase that specifically demethylates 'Lys-36' of histone H3, thereby playing a central role in histone code. The polypeptide is JmjC domain-containing histone demethylation protein 1 (JHD1) (Candida albicans (strain SC5314 / ATCC MYA-2876) (Yeast)).